A 325-amino-acid chain; its full sequence is ATP phosphoribosyltransferase (325 aa).

It belongs to the ATP phosphoribosyltransferase family. Long subfamily. Mg(2+) serves as cofactor.

The protein localises to the cytoplasm. It catalyses the reaction 1-(5-phospho-beta-D-ribosyl)-ATP + diphosphate = 5-phospho-alpha-D-ribose 1-diphosphate + ATP. It functions in the pathway amino-acid biosynthesis; L-histidine biosynthesis; L-histidine from 5-phospho-alpha-D-ribose 1-diphosphate: step 1/9. Feedback inhibited by histidine. Catalyzes the condensation of ATP and 5-phosphoribose 1-diphosphate to form N'-(5'-phosphoribosyl)-ATP (PR-ATP). Has a crucial role in the pathway because the rate of histidine biosynthesis seems to be controlled primarily by regulation of HisG enzymatic activity. In Rhodopseudomonas palustris (strain BisB18), this protein is ATP phosphoribosyltransferase.